Consider the following 591-residue polypeptide: Parathyroid hormone/parathyroid hormone-related peptide receptor (591 aa).

Residues 1–26 (MGTARIAPSLALLLCCPVLSSAYALV) form the signal peptide. Residues 27 to 188 (DADDVFTKEE…REREVFDRLG (162 aa)) are Extracellular-facing. Intrachain disulfides connect cysteine 48–cysteine 117, cysteine 108–cysteine 148, and cysteine 131–cysteine 170. A disordered region spans residues 67 to 104 (KGWTPASTSGKPRKEKAPGKFYPESKENKDVPTGSRRR). Over residues 81–96 (EKAPGKFYPESKENKD) the composition is skewed to basic and acidic residues. N-linked (GlcNAc...) asparagine glycans are attached at residues asparagine 151, asparagine 161, asparagine 166, and asparagine 176. Residues 189–212 (MIYTVGYSMSLASLTVAVLILAYF) form a helical membrane-spanning segment. The Cytoplasmic portion of the chain corresponds to 213-219 (RRLHCTR). The chain crosses the membrane as a helical span at residues 220–239 (NYIHMHMFLSFMLRAASIFV). Over 240–282 (KDAVLYSGFTLDEAERLTEEELHIIAQVPPPPAAAAVGYAGCR) the chain is Extracellular. Residues 283 to 306 (VAVTFFLYFLATNYYWILVEGLYL) form a helical membrane-spanning segment. Over 307–320 (HSLIFMAFFSEKKY) the chain is Cytoplasmic. The helical transmembrane segment at 321-342 (LWGFTIFGWGLPAVFVAVWVGV) threads the bilayer. Residues 343 to 361 (RATLANTGCWDLSSGHKKW) are Extracellular-facing. A helical transmembrane segment spans residues 362-382 (IIQVPILASVVLNFILFINII). Topologically, residues 383–409 (RVLATKLRETNAGRCDTRQQYRKLLRS) are cytoplasmic. Residues 410 to 428 (TLVLVPLFGVHYTVFMALP) traverse the membrane as a helical segment. Residues 429-440 (YTEVSGTLWQIQ) lie on the Extracellular side of the membrane. A helical membrane pass occupies residues 441–463 (MHYEMLFNSFQGFFVAIIYCFCN). Residues 464-591 (GEVQAEIRKS…LLQEEWETVM (128 aa)) lie on the Cytoplasmic side of the membrane. The Important for interaction with G proteins motif lies at 474–477 (WSRW).

It belongs to the G-protein coupled receptor 2 family. In terms of assembly, homodimer in the absence of bound ligand. Peptide hormone binding leads to dissociation of the homodimer. In terms of processing, N-glycosylated. As to expression, detected in kidney.

It localises to the cell membrane. In terms of biological role, G-protein-coupled receptor for parathyroid hormone (PTH) and for parathyroid hormone-related peptide (PTHLH). Ligand binding causes a conformation change that triggers signaling via guanine nucleotide-binding proteins (G proteins) and modulates the activity of downstream effectors, such as adenylate cyclase (cAMP). PTH1R is coupled to G(s) G alpha proteins and mediates activation of adenylate cyclase activity. PTHLH dissociates from PTH1R more rapidly than PTH; as consequence, the cAMP response induced by PTHLH decays faster than the response induced by PTH. The polypeptide is Parathyroid hormone/parathyroid hormone-related peptide receptor (Pth1r) (Mus musculus (Mouse)).